Here is a 113-residue protein sequence, read N- to C-terminus: uncharacterized protein (113 aa).

This is an uncharacterized protein from Acanthamoeba polyphaga mimivirus (APMV).